A 149-amino-acid polypeptide reads, in one-letter code: 3-dehydroquinate dehydratase (149 aa).

Residue Tyr-26 is the Proton acceptor of the active site. Substrate contacts are provided by Asn-75, His-81, and Asp-88. His-101 functions as the Proton donor in the catalytic mechanism. Substrate contacts are provided by residues 102–103 and Arg-112; that span reads LS.

Belongs to the type-II 3-dehydroquinase family. As to quaternary structure, homododecamer.

It catalyses the reaction 3-dehydroquinate = 3-dehydroshikimate + H2O. It functions in the pathway metabolic intermediate biosynthesis; chorismate biosynthesis; chorismate from D-erythrose 4-phosphate and phosphoenolpyruvate: step 3/7. Its function is as follows. Catalyzes a trans-dehydration via an enolate intermediate. The polypeptide is 3-dehydroquinate dehydratase (Shewanella woodyi (strain ATCC 51908 / MS32)).